The sequence spans 141 residues: Large ribosomal subunit protein uL11 (141 aa).

This sequence belongs to the universal ribosomal protein uL11 family. As to quaternary structure, part of the ribosomal stalk of the 50S ribosomal subunit. Interacts with L10 and the large rRNA to form the base of the stalk. L10 forms an elongated spine to which L12 dimers bind in a sequential fashion forming a multimeric L10(L12)X complex. One or more lysine residues are methylated.

In terms of biological role, forms part of the ribosomal stalk which helps the ribosome interact with GTP-bound translation factors. This is Large ribosomal subunit protein uL11 from Selenomonas ruminantium.